The sequence spans 394 residues: Short-chain dehydrogenase/reductase family 42E member 1 (394 aa).

The Proton acceptor role is filled by tyrosine 153. NAD(+) is bound at residue lysine 157. The next 2 membrane-spanning stretches (helical) occupy residues 283-303 (LPLT…FIVG) and 367-387 (FMLW…TWIL).

It belongs to the 3-beta-HSD family.

The protein resides in the membrane. The protein is Short-chain dehydrogenase/reductase family 42E member 1 (Sdr42e1) of Mus musculus (Mouse).